The sequence spans 84 residues: Large ribosomal subunit protein uL23 (84 aa).

It belongs to the universal ribosomal protein uL23 family. As to quaternary structure, part of the 50S ribosomal subunit. Contacts protein L29.

Functionally, binds to 23S rRNA. One of the proteins that surrounds the polypeptide exit tunnel on the outside of the ribosome. In Haloquadratum walsbyi (strain DSM 16790 / HBSQ001), this protein is Large ribosomal subunit protein uL23.